Here is a 217-residue protein sequence, read N- to C-terminus: Translation initiation factor IF-3 (217 aa).

The segment at 179-217 (PRKTPLVKKEEKEAAPTKAVRTIPAPPRPTAAKVAAQQA) is disordered.

Belongs to the IF-3 family. As to quaternary structure, monomer.

It localises to the cytoplasm. Its function is as follows. IF-3 binds to the 30S ribosomal subunit and shifts the equilibrium between 70S ribosomes and their 50S and 30S subunits in favor of the free subunits, thus enhancing the availability of 30S subunits on which protein synthesis initiation begins. This chain is Translation initiation factor IF-3, found in Parasynechococcus marenigrum (strain WH8102).